An 884-amino-acid polypeptide reads, in one-letter code: Coatomer subunit gamma-1 (884 aa).

HEAT repeat units follow at residues 65–100 (VEAT…SPSS), 101–138 (DEVI…GTLL), 286–323 (RELA…TRPL), 325–357 (VTNC…TGNE), and 358–395 (SSVD…KFPL). The tract at residues 592 to 612 (QPLQEKKAPGKKPPAGAPAPA) is disordered. Residues 602–612 (KKPPAGAPAPA) show a composition bias toward pro residues.

The protein belongs to the COPG family. As to quaternary structure, oligomeric complex that consists of at least the alpha, beta, beta', gamma, delta, epsilon and zeta subunits.

The protein localises to the cytoplasm. It localises to the golgi apparatus membrane. It is found in the cytoplasmic vesicle. Its subcellular location is the COPI-coated vesicle membrane. Functionally, the coatomer is a cytosolic protein complex that binds to dilysine motifs and reversibly associates with Golgi non-clathrin-coated vesicles, which further mediate biosynthetic protein transport from the ER, via the Golgi up to the trans Golgi network. Coatomer complex is required for budding from Golgi membranes, and is essential for the retrograde Golgi-to-ER transport of dilysine-tagged proteins. This is Coatomer subunit gamma-1 from Oryza sativa subsp. japonica (Rice).